Here is a 559-residue protein sequence, read N- to C-terminus: 2,3-bisphosphoglycerate-independent phosphoglycerate mutase (559 aa).

2 residues coordinate Mn(2+): Asp28 and Ser81. Ser81 acts as the Phosphoserine intermediate in catalysis. Substrate-binding positions include His140, 170 to 171 (RD), Arg206, Arg213, 286 to 289 (RADR), and Lys361. Residues Asp430, His434, Asp471, His472, and His501 each contribute to the Mn(2+) site.

The protein belongs to the BPG-independent phosphoglycerate mutase family. In terms of assembly, monomer. Requires Mn(2+) as cofactor. Post-translationally, the N-terminus is blocked. As to expression, found ubiquitously in germinating seed.

The protein resides in the cytoplasm. It carries out the reaction (2R)-2-phosphoglycerate = (2R)-3-phosphoglycerate. Its pathway is carbohydrate degradation; glycolysis; pyruvate from D-glyceraldehyde 3-phosphate: step 3/5. Functionally, catalyzes the interconversion of 2-phosphoglycerate and 3-phosphoglycerate. The sequence is that of 2,3-bisphosphoglycerate-independent phosphoglycerate mutase from Zea mays (Maize).